We begin with the raw amino-acid sequence, 156 residues long: Large ribosomal subunit protein uL15 (156 aa).

The span at M1 to G11 shows a compositional bias: basic and acidic residues. Residues M1 to S40 form a disordered region. The segment covering R21–V35 has biased composition (gly residues).

Belongs to the universal ribosomal protein uL15 family. Part of the 50S ribosomal subunit.

Binds to the 23S rRNA. This chain is Large ribosomal subunit protein uL15, found in Brucella anthropi (strain ATCC 49188 / DSM 6882 / CCUG 24695 / JCM 21032 / LMG 3331 / NBRC 15819 / NCTC 12168 / Alc 37) (Ochrobactrum anthropi).